We begin with the raw amino-acid sequence, 576 residues long: Eukaryotic translation initiation factor 3 subunit D (576 aa).

Residues Asp103 to Arg176 are disordered. Positions Gly110–Gly122 are enriched in gly residues. The segment covering Gly165–Arg176 has biased composition (basic and acidic residues). The segment at Thr304–Pro318 is RNA gate.

It belongs to the eIF-3 subunit D family. As to quaternary structure, component of the eukaryotic translation initiation factor 3 (eIF-3) complex.

It is found in the cytoplasm. MRNA cap-binding component of the eukaryotic translation initiation factor 3 (eIF-3) complex, which is involved in protein synthesis of a specialized repertoire of mRNAs and, together with other initiation factors, stimulates binding of mRNA and methionyl-tRNAi to the 40S ribosome. The eIF-3 complex specifically targets and initiates translation of a subset of mRNAs involved in cell proliferation. In the eIF-3 complex, eif3d specifically recognizes and binds the 7-methylguanosine cap of a subset of mRNAs. The sequence is that of Eukaryotic translation initiation factor 3 subunit D from Botryotinia fuckeliana (strain B05.10) (Noble rot fungus).